A 145-amino-acid chain; its full sequence is Flagellar assembly factor FliW (145 aa).

The protein belongs to the FliW family. As to quaternary structure, interacts with translational regulator CsrA and flagellin(s).

Its subcellular location is the cytoplasm. Functionally, acts as an anti-CsrA protein, binds CsrA and prevents it from repressing translation of its target genes, one of which is flagellin. Binds to flagellin and participates in the assembly of the flagellum. In Clostridium tetani (strain Massachusetts / E88), this protein is Flagellar assembly factor FliW.